The sequence spans 358 residues: Probable branched-chain-amino-acid aminotransferase (358 aa).

N6-(pyridoxal phosphate)lysine is present on Lys-196.

Belongs to the class-IV pyridoxal-phosphate-dependent aminotransferase family. Pyridoxal 5'-phosphate serves as cofactor.

It carries out the reaction L-leucine + 2-oxoglutarate = 4-methyl-2-oxopentanoate + L-glutamate. The enzyme catalyses L-isoleucine + 2-oxoglutarate = (S)-3-methyl-2-oxopentanoate + L-glutamate. It catalyses the reaction L-valine + 2-oxoglutarate = 3-methyl-2-oxobutanoate + L-glutamate. The protein operates within amino-acid biosynthesis; L-isoleucine biosynthesis; L-isoleucine from 2-oxobutanoate: step 4/4. It participates in amino-acid biosynthesis; L-leucine biosynthesis; L-leucine from 3-methyl-2-oxobutanoate: step 4/4. It functions in the pathway amino-acid biosynthesis; L-valine biosynthesis; L-valine from pyruvate: step 4/4. Its function is as follows. Acts on leucine, isoleucine and valine. This chain is Probable branched-chain-amino-acid aminotransferase (ilvE), found in Staphylococcus epidermidis (strain ATCC 35984 / DSM 28319 / BCRC 17069 / CCUG 31568 / BM 3577 / RP62A).